The chain runs to 270 residues: UPF0354 protein BC_4690 (270 aa).

This sequence belongs to the UPF0354 family.

The chain is UPF0354 protein BC_4690 from Bacillus cereus (strain ATCC 14579 / DSM 31 / CCUG 7414 / JCM 2152 / NBRC 15305 / NCIMB 9373 / NCTC 2599 / NRRL B-3711).